The following is a 3890-amino-acid chain: Extracellular matrix-binding protein EbhB (3890 aa).

Positions 1–39 are cleaved as a signal peptide; that stretch reads MNYRDKIQKFSIRKYTVGTFSTVIATLVFLGFNTSQAHA. Positions 41–59 are enriched in polar residues; that stretch reads ETNQPASVVKQKQQSNNEQ. Disordered stretches follow at residues 41 to 152, 249 to 277, 1347 to 1372, and 2418 to 2438; these read ETNQ…GNDN, MPQR…PRSV, NEKA…NATT, and TITP…TLTA. A compositionally biased stretch (low complexity) spans 65–78; the sequence is SQVQNSQNSQNSQS. Over residues 79-117 the composition is skewed to polar residues; that stretch reads LSATHENEQPNNSQANLVNQKVAQSSTTNDEQPASQNVN. The span at 130-140 shows a compositional bias: basic and acidic residues; the sequence is PDKEESKHKQN. Polar residues-rich tracts occupy residues 141-151, 250-266, 1360-1372, and 2427-2438; these read ESQSANKNGND, PQRQ…QTRS, YRTT…NATT, and HSVSSNPSTLTA. FIVAR domains follow at residues 2524–2580, 2610–2666, 2687–2750, 2780–2836, 2864–2919, 2947–3002, 3030–3085, 3154–3212, 3280–3339, 3407–3465, 3533–3591, 3659–3717, and 3785–3843; these read AKNH…VSDA, SKNN…ISDE, DTHA…VQSA, AKTK…IAAE, AKTQ…IRQN, AKNQ…INTN, AKTQ…INDK, AMTK…VNQK, AMTG…VNNA, AMGN…VNRA, AMGN…VTEA, AMNT…ITQK, and AMAN…VEAA.

The protein is Extracellular matrix-binding protein EbhB (ebhB) of Staphylococcus aureus (strain N315).